The primary structure comprises 149 residues: Cytochrome c-type biogenesis protein CcmE (149 aa).

At 1-7 (MTRKQKR) the chain is on the cytoplasmic side. The chain crosses the membrane as a helical; Signal-anchor for type II membrane protein span at residues 8-28 (LAVIAGGVGFIMVAVLLVLFA). Residues 29–149 (FGQSIAYFYM…GVWKGEGEAK (121 aa)) are Periplasmic-facing. The heme site is built by H123 and Y127.

It belongs to the CcmE/CycJ family.

Its subcellular location is the cell inner membrane. In terms of biological role, heme chaperone required for the biogenesis of c-type cytochromes. Transiently binds heme delivered by CcmC and transfers the heme to apo-cytochromes in a process facilitated by CcmF and CcmH. The polypeptide is Cytochrome c-type biogenesis protein CcmE (Allorhizobium ampelinum (strain ATCC BAA-846 / DSM 112012 / S4) (Agrobacterium vitis (strain S4))).